A 20-amino-acid chain; its full sequence is Venom peptide Ocy8 (20 aa).

As to expression, expressed by the venom gland.

It localises to the secreted. This Opisthacanthus cayaporum (South American scorpion) protein is Venom peptide Ocy8.